Reading from the N-terminus, the 116-residue chain is Large ribosomal subunit protein bL20c (116 aa).

This sequence belongs to the bacterial ribosomal protein bL20 family.

Its subcellular location is the plastid. The protein localises to the chloroplast. Functionally, binds directly to 23S ribosomal RNA and is necessary for the in vitro assembly process of the 50S ribosomal subunit. It is not involved in the protein synthesizing functions of that subunit. The polypeptide is Large ribosomal subunit protein bL20c (Oltmannsiellopsis viridis (Marine flagellate)).